The following is an 89-amino-acid chain: Small ribosomal subunit protein bS20 (89 aa).

The interval 1 to 20 (MANHKSAEKRARQTIKRTER) is disordered.

It belongs to the bacterial ribosomal protein bS20 family.

Its function is as follows. Binds directly to 16S ribosomal RNA. This is Small ribosomal subunit protein bS20 from Campylobacter curvus (strain 525.92).